The chain runs to 100 residues: Small ribosomal subunit protein uS14c (100 aa).

It belongs to the universal ribosomal protein uS14 family. Part of the 30S ribosomal subunit.

Its subcellular location is the plastid. It localises to the chloroplast. Functionally, binds 16S rRNA, required for the assembly of 30S particles. The sequence is that of Small ribosomal subunit protein uS14c from Lobularia maritima (Sweet alyssum).